The sequence spans 561 residues: DNA ligase B (561 aa).

Lys-125 serves as the catalytic N6-AMP-lysine intermediate.

Belongs to the NAD-dependent DNA ligase family. LigB subfamily.

It catalyses the reaction NAD(+) + (deoxyribonucleotide)n-3'-hydroxyl + 5'-phospho-(deoxyribonucleotide)m = (deoxyribonucleotide)n+m + AMP + beta-nicotinamide D-nucleotide.. Functionally, catalyzes the formation of phosphodiester linkages between 5'-phosphoryl and 3'-hydroxyl groups in double-stranded DNA using NAD as a coenzyme and as the energy source for the reaction. In Escherichia coli O127:H6 (strain E2348/69 / EPEC), this protein is DNA ligase B.